A 608-amino-acid polypeptide reads, in one-letter code: 2',5'-phosphodiesterase 12 (608 aa).

The transit peptide at 1-16 (MWRLPGRSALRGVRSV) directs the protein to the mitochondrion. The segment covering 90–99 (AAKKSRKNRA) has biased composition (basic residues). The disordered stretch occupies residues 90-111 (AAKKSRKNRAHSSGGAACEATG). Residue S216 is modified to Phosphoserine. The Mg(2+) site is built by E350, D495, and N497. D495 functions as the Proton donor/acceptor in the catalytic mechanism.

The protein belongs to the CCR4/nocturin family. It depends on Mg(2+) as a cofactor.

The protein localises to the mitochondrion matrix. The enzyme catalyses Exonucleolytic cleavage of poly(A) to 5'-AMP.. In terms of biological role, enzyme that cleaves 2',5'-phosphodiester bond linking adenosines of the 5'-triphosphorylated oligoadenylates, triphosphorylated oligoadenylates referred as 2-5A modulates the 2-5A system. Degrades triphosphorylated 2-5A to produce AMP and ATP. Also cleaves 3',5'-phosphodiester bond of oligoadenylates. Plays a role as a negative regulator of the 2-5A system that is one of the major pathways for antiviral and antitumor functions induced by interferons (IFNs). Suppression of this enzyme increases cellular 2-5A levels and decreases viral replication in cultured small-airway epithelial cells. In Mus musculus (Mouse), this protein is 2',5'-phosphodiesterase 12 (Pde12).